The following is a 139-amino-acid chain: D-ribose pyranase (139 aa).

H20 (proton donor) is an active-site residue. Substrate-binding positions include D28, H106, and 128–130 (YAN).

It belongs to the RbsD / FucU family. RbsD subfamily. Homodecamer.

The protein localises to the cytoplasm. It catalyses the reaction beta-D-ribopyranose = beta-D-ribofuranose. The protein operates within carbohydrate metabolism; D-ribose degradation; D-ribose 5-phosphate from beta-D-ribopyranose: step 1/2. Catalyzes the interconversion of beta-pyran and beta-furan forms of D-ribose. The polypeptide is D-ribose pyranase (Escherichia coli (strain 55989 / EAEC)).